Here is a 197-residue protein sequence, read N- to C-terminus: Probable GTP-binding protein EngB (197 aa).

Residues 22–195 (NLPEIAFVGR…VDYLFDDLVE (174 aa)) enclose the EngB-type G domain. GTP-binding positions include 30–37 (GRSNVGKS), 57–61 (GKTRL), 75–78 (DLPG), 142–145 (TKSD), and 174–176 (FSS). Residues S37 and T59 each contribute to the Mg(2+) site.

It belongs to the TRAFAC class TrmE-Era-EngA-EngB-Septin-like GTPase superfamily. EngB GTPase family. The cofactor is Mg(2+).

In terms of biological role, necessary for normal cell division and for the maintenance of normal septation. The chain is Probable GTP-binding protein EngB from Clostridium perfringens (strain SM101 / Type A).